Reading from the N-terminus, the 619-residue chain is Serine/threonine-protein kinase pkn1 (619 aa).

In terms of domain architecture, Protein kinase spans tyrosine 15–leucine 302. Residue lysine 21–aspartate 29 coordinates ATP. Residue glutamate 141 is the Proton acceptor of the active site.

The protein belongs to the protein kinase superfamily. Ser/Thr protein kinase family. In terms of processing, autophosphorylated on serine and threonine residues.

It carries out the reaction L-seryl-[protein] + ATP = O-phospho-L-seryl-[protein] + ADP + H(+). It catalyses the reaction L-threonyl-[protein] + ATP = O-phospho-L-threonyl-[protein] + ADP + H(+). Together with the serine/threonine kinase PknD, may play a role in the specific interactions with host proteins during intracellular growth. The sequence is that of Serine/threonine-protein kinase pkn1 (pkn1) from Chlamydia pneumoniae (Chlamydophila pneumoniae).